Here is a 60-residue protein sequence, read N- to C-terminus: UPF0434 protein Ent638_1436 (60 aa).

It belongs to the UPF0434 family.

In Enterobacter sp. (strain 638), this protein is UPF0434 protein Ent638_1436.